The primary structure comprises 376 residues: tRNA-specific 2-thiouridylase MnmA (376 aa).

Residues 16–23 and Leu-42 contribute to the ATP site; that span reads AMSGGVDS. Cys-111 acts as the Nucleophile in catalysis. A disulfide bond links Cys-111 and Cys-210. An ATP-binding site is contributed by Gly-135. The interval 158–160 is interaction with tRNA; that stretch reads KDQ. The active-site Cysteine persulfide intermediate is the Cys-210.

It belongs to the MnmA/TRMU family.

It localises to the cytoplasm. It carries out the reaction S-sulfanyl-L-cysteinyl-[protein] + uridine(34) in tRNA + AH2 + ATP = 2-thiouridine(34) in tRNA + L-cysteinyl-[protein] + A + AMP + diphosphate + H(+). In terms of biological role, catalyzes the 2-thiolation of uridine at the wobble position (U34) of tRNA, leading to the formation of s(2)U34. The protein is tRNA-specific 2-thiouridylase MnmA of Streptomyces avermitilis (strain ATCC 31267 / DSM 46492 / JCM 5070 / NBRC 14893 / NCIMB 12804 / NRRL 8165 / MA-4680).